Here is a 393-residue protein sequence, read N- to C-terminus: 8-amino-7-oxononanoate synthase (393 aa).

108–109 contacts pyridoxal 5'-phosphate; that stretch reads GF. H133 contributes to the substrate binding site. Residues S182, 207–210, and 238–241 each bind pyridoxal 5'-phosphate; these read DDAH and TLSK. K241 is modified (N6-(pyridoxal phosphate)lysine). T355 lines the substrate pocket.

Belongs to the class-II pyridoxal-phosphate-dependent aminotransferase family. BioF subfamily. Homodimer. Requires pyridoxal 5'-phosphate as cofactor.

It carries out the reaction 6-carboxyhexanoyl-[ACP] + L-alanine + H(+) = (8S)-8-amino-7-oxononanoate + holo-[ACP] + CO2. It participates in cofactor biosynthesis; biotin biosynthesis. Catalyzes the decarboxylative condensation of pimeloyl-[acyl-carrier protein] and L-alanine to produce 8-amino-7-oxononanoate (AON), [acyl-carrier protein], and carbon dioxide. The sequence is that of 8-amino-7-oxononanoate synthase from Petrotoga mobilis (strain DSM 10674 / SJ95).